A 156-amino-acid chain; its full sequence is MPRRRVIGQRKILPDPKFGSELLAKFVNILMVDGKKSTAESIVYSALETLAQRSGKTELEAFETALENVRPTVEVKSRRVGGSTYQVPVEVRPVRRNALAMRWIVEAARKRGDKSMALRLANELSDAAENKGTAVKKREDVHRMAEANKAFAHYRW.

It belongs to the universal ribosomal protein uS7 family. Part of the 30S ribosomal subunit. Contacts proteins S9 and S11.

One of the primary rRNA binding proteins, it binds directly to 16S rRNA where it nucleates assembly of the head domain of the 30S subunit. Is located at the subunit interface close to the decoding center, probably blocks exit of the E-site tRNA. The protein is Small ribosomal subunit protein uS7 of Edwardsiella ictaluri (strain 93-146).